The primary structure comprises 584 residues: DNA mismatch repair protein MutL (584 aa).

The protein belongs to the DNA mismatch repair MutL/HexB family.

In terms of biological role, this protein is involved in the repair of mismatches in DNA. It is required for dam-dependent methyl-directed DNA mismatch repair. May act as a 'molecular matchmaker', a protein that promotes the formation of a stable complex between two or more DNA-binding proteins in an ATP-dependent manner without itself being part of a final effector complex. The sequence is that of DNA mismatch repair protein MutL from Buchnera aphidicola subsp. Acyrthosiphon pisum (strain 5A).